A 358-amino-acid polypeptide reads, in one-letter code: MELGEERYPIYVGAGLMAQLGALVRRHLPETRRALLVTDANVAPLYGEAARAALEQAGITTARVTVPAGEASKSLSQAYSLYSSCVRAELDRTSAVVALGGGVVGDLAGFVAATYLRGIPLVQVPTTLLAQVDSSIGGKTGVDLPQGKNLVGAFHQPSLVVADVETLKSLPRRELSAGMAEVVKHGVIRDEEFLKYVEVQVGNVLAGDPAVLERVVAESCRIKAEVVAADPREKGLRAILNFGHTVGHALEAAIGFRWLHGECVAVGMVAAAHIARHSGIAQEGRLELRLTRLLERLDLPTTLPEGMDPKDLEPFLRRDKKIKSGVIHWVMPVRPGEVVVTPDVSPDAIRWGLEALRR.

Residues 102 to 106 (GVVGD), 126 to 127 (TT), lysine 139, and lysine 148 contribute to the NAD(+) site. Residues glutamate 181, histidine 244, and histidine 260 each coordinate Zn(2+).

Belongs to the sugar phosphate cyclases superfamily. Dehydroquinate synthase family. It depends on Co(2+) as a cofactor. Zn(2+) serves as cofactor. Requires NAD(+) as cofactor.

It is found in the cytoplasm. The catalysed reaction is 7-phospho-2-dehydro-3-deoxy-D-arabino-heptonate = 3-dehydroquinate + phosphate. Its pathway is metabolic intermediate biosynthesis; chorismate biosynthesis; chorismate from D-erythrose 4-phosphate and phosphoenolpyruvate: step 2/7. Functionally, catalyzes the conversion of 3-deoxy-D-arabino-heptulosonate 7-phosphate (DAHP) to dehydroquinate (DHQ). In Symbiobacterium thermophilum (strain DSM 24528 / JCM 14929 / IAM 14863 / T), this protein is 3-dehydroquinate synthase.